Consider the following 185-residue polypeptide: Comitin (185 aa).

One can recognise a Bulb-type lectin domain in the interval M1–P123. The tract at residues S138–Y185 is disordered. Over residues P141–Q157 the composition is skewed to low complexity. Repeat copies occupy residues G153–P158, G159–P164, G165–H170, G171–H176, and G177–P182. The interval G153 to P182 is 5 X 6 AA tandem repeats of G-Y-P-X-Q-[PH]. The span at P158–G171 shows a compositional bias: pro residues. Residues Y172–Y185 are compositionally biased toward low complexity.

Homodimer in solution. Post-translationally, the N-terminus is blocked.

The protein resides in the golgi apparatus membrane. It is found in the endomembrane system. Its subcellular location is the cytoplasm. The protein localises to the cytoskeleton. Functionally, may have a role in cell motility. It has high affinity for both G-actin and F-actin. Binds to vesicle membranes via mannose residues and, by way of its interaction with actin, links these membranes to the cytoskeleton. In Dictyostelium discoideum (Social amoeba), this protein is Comitin (comA).